The chain runs to 430 residues: UDP-glucose 6-dehydrogenase AglM (430 aa).

Residue cysteine 269 is part of the active site.

It belongs to the UDP-glucose/GDP-mannose dehydrogenase family.

The catalysed reaction is UDP-alpha-D-glucose + 2 NAD(+) + H2O = UDP-alpha-D-glucuronate + 2 NADH + 3 H(+). It functions in the pathway nucleotide-sugar biosynthesis; UDP-alpha-D-glucuronate biosynthesis; UDP-alpha-D-glucuronate from UDP-alpha-D-glucose: step 1/1. Its pathway is cell surface structure biogenesis; S-layer biogenesis. Activity improves as salinity decreases. Functionally, involved in the assembly of a N-linked pentasaccharide that decorates the S-layer glycoprotein and flagellins. Involved in the biosynthesis of the hexuronic acids found at both positions 2 and 3 of the pentasaccharide. This is UDP-glucose 6-dehydrogenase AglM (aglM) from Haloferax volcanii (strain ATCC 29605 / DSM 3757 / JCM 8879 / NBRC 14742 / NCIMB 2012 / VKM B-1768 / DS2) (Halobacterium volcanii).